The primary structure comprises 423 residues: ATP-citrate synthase alpha chain protein 1 (423 aa).

Residues Asn343, Thr345, and Arg376 each coordinate citrate.

It belongs to the succinate/malate CoA ligase beta subunit family. In terms of assembly, heterooctamer of 4 alpha and 4 beta chains. Expressed in trichomes, epidermal leaf cells, anther tapetal cells, stigma and in young vascular bundles of expanding leaves, cotyledons, roots, pedicel of flowers and siliques.

The protein resides in the cytoplasm. It is found in the cytosol. It carries out the reaction oxaloacetate + acetyl-CoA + ADP + phosphate = citrate + ATP + CoA. ATP citrate-lyase is the primary enzyme responsible for the synthesis of cytosolic acetyl-CoA, used for the elongation of fatty acids and biosynthesis of isoprenoids, flavonoids and malonated derivatives. May supply substrate to the cytosolic acetyl-CoA carboxylase, which generates the malonyl-CoA used for the synthesis of a multitude of compounds, including very long chain fatty acids and flavonoids. Required for normal growth and development and elongation of C18 fatty acids to C20 to C24 fatty acids in seeds. In contrast to all known animal ACL enzymes having a homomeric structure, plant ACLs are composed of alpha and beta chains. This chain is ATP-citrate synthase alpha chain protein 1 (ACLA-1), found in Arabidopsis thaliana (Mouse-ear cress).